A 338-amino-acid polypeptide reads, in one-letter code: Lipopolysaccharide 1,2-glucosyltransferase (338 aa).

UDP-binding positions include 33–38 and 130–131; these read GVDANY and DA. Residues D130 and D132 each coordinate Mg(2+). 2 short sequence motifs (DXD) span residues 130–132 and 215–217; these read DAD and DQD. H264 is a Mg(2+) binding site. 264–270 contacts UDP; sequence HYTGATK.

This sequence belongs to the glycosyltransferase 8 family. The cofactor is Mg(2+).

It is found in the cell inner membrane. The enzyme catalyses UDP-glucose + [lipopolysaccharide] = UDP + D-glucosyl-[lipopolysaccharide].. It carries out the reaction alpha-D-Glc-(1-&gt;3)-[alpha-D-Gal-(1-&gt;6)]-alpha-D-Glc-(1-&gt;3)-[L-alpha-D-Hep-(1-&gt;7)]-4-O-PO3(2-)-L-alpha-D-Hep-(1-&gt;3)-4-O-PO3(2-)-L-alpha-D-Hep-(1-&gt;5)-[alpha-Kdo-(2-&gt;4)]-alpha-Kdo-(2-&gt;6)-lipid A + UDP-alpha-D-glucose = alpha-D-Glc-(1-&gt;2)-alpha-D-Glc-(1-&gt;3)-[alpha-D-Gal-(1-&gt;6)]-alpha-D-Glc-(1-&gt;3)-[L-alpha-D-Hep-(1-&gt;7)]-4-O-PO3(2-)-L-alpha-D-Hep-(1-&gt;3)-4-O-PO3(2-)-L-alpha-D-Hep-(1-&gt;5)-[alpha-Kdo-(2-&gt;4)]-alpha-Kdo-(2-&gt;6)-lipid A + UDP + H(+). Its pathway is bacterial outer membrane biogenesis; LPS core biosynthesis. In terms of biological role, glucosyltransferase involved in the biosynthesis of the core oligosaccharide region of lipopolysaccharide (LPS). Catalyzes the addition of a glucose (glucose III) to the outer-core glucose II. This Escherichia coli (strain K12) protein is Lipopolysaccharide 1,2-glucosyltransferase.